Here is a 130-residue protein sequence, read N- to C-terminus: S-adenosylmethionine decarboxylase proenzyme (130 aa).

Ser-78 acts as the Schiff-base intermediate with substrate; via pyruvic acid in catalysis. Ser-78 carries the post-translational modification Pyruvic acid (Ser); by autocatalysis. His-83 serves as the catalytic Proton acceptor; for processing activity. Residue Cys-98 is the Proton donor; for catalytic activity of the active site.

It belongs to the prokaryotic AdoMetDC family. Type 1 subfamily. In terms of assembly, heterotetramer of two alpha and two beta chains arranged as a dimer of alpha/beta heterodimers. The cofactor is pyruvate. Is synthesized initially as an inactive proenzyme. Formation of the active enzyme involves a self-maturation process in which the active site pyruvoyl group is generated from an internal serine residue via an autocatalytic post-translational modification. Two non-identical subunits are generated from the proenzyme in this reaction, and the pyruvate is formed at the N-terminus of the alpha chain, which is derived from the carboxyl end of the proenzyme. The post-translation cleavage follows an unusual pathway, termed non-hydrolytic serinolysis, in which the side chain hydroxyl group of the serine supplies its oxygen atom to form the C-terminus of the beta chain, while the remainder of the serine residue undergoes an oxidative deamination to produce ammonia and the pyruvoyl group blocking the N-terminus of the alpha chain.

It carries out the reaction S-adenosyl-L-methionine + H(+) = S-adenosyl 3-(methylsulfanyl)propylamine + CO2. Its pathway is amine and polyamine biosynthesis; S-adenosylmethioninamine biosynthesis; S-adenosylmethioninamine from S-adenosyl-L-methionine: step 1/1. In terms of biological role, catalyzes the decarboxylation of S-adenosylmethionine to S-adenosylmethioninamine (dcAdoMet), the propylamine donor required for the synthesis of the polyamines spermine and spermidine from the diamine putrescine. The chain is S-adenosylmethionine decarboxylase proenzyme from Aeropyrum pernix (strain ATCC 700893 / DSM 11879 / JCM 9820 / NBRC 100138 / K1).